Here is a 62-residue protein sequence, read N- to C-terminus: Large ribosomal subunit protein uL30 (62 aa).

This sequence belongs to the universal ribosomal protein uL30 family. In terms of assembly, part of the 50S ribosomal subunit.

This Nitrosospira multiformis (strain ATCC 25196 / NCIMB 11849 / C 71) protein is Large ribosomal subunit protein uL30.